The following is a 376-amino-acid chain: MKILVDENMPYVEPLFGDLGDIIPVNGRTLTAEQVREADVLLVRSVTKVNAELLSGNNKLKFVGSATIGTDHVDLAYLAERNIPFSNAPGCNATAVGEFAFIAMLELAQRFNSPLKGKVVGIVGAGNTGTATAKCLQAYGIKVLLNDPIKAAEGDPRSFVSLETIMAQADIISLHVPITRTGEHKTKYLFDEARLKALKPNTWFVNCCRGDVIDNQALIKVKQQRDDLKLVLDVWEGEPTPLPELVPLAEFATPHIAGYSLEGKARGTFMLYQKLCQLLNITADKSLLDLLPSFNIKAVELATAPNEKALLQLARFVYDLRDDDKMFRNTFLNENGFDTMRKNHQHRREFSALALAYDGQSEVDWLSNLGFSGVGQ.

The substrate site is built by Ser-45 and Thr-67. An NAD(+)-binding site is contributed by Asp-147. Arg-209 is an active-site residue. Asp-233 contributes to the NAD(+) binding site. Residue Glu-238 is part of the active site. His-255 serves as the catalytic Proton donor. Gly-258 serves as a coordination point for NAD(+). Substrate is bound at residue Tyr-259.

Belongs to the D-isomer specific 2-hydroxyacid dehydrogenase family. PdxB subfamily. In terms of assembly, homodimer.

The protein localises to the cytoplasm. It catalyses the reaction 4-phospho-D-erythronate + NAD(+) = (R)-3-hydroxy-2-oxo-4-phosphooxybutanoate + NADH + H(+). The protein operates within cofactor biosynthesis; pyridoxine 5'-phosphate biosynthesis; pyridoxine 5'-phosphate from D-erythrose 4-phosphate: step 2/5. Its function is as follows. Catalyzes the oxidation of erythronate-4-phosphate to 3-hydroxy-2-oxo-4-phosphonooxybutanoate. This Shewanella baltica (strain OS195) protein is Erythronate-4-phosphate dehydrogenase.